We begin with the raw amino-acid sequence, 381 residues long: Cytochrome b (381 aa).

4 consecutive transmembrane segments (helical) span residues 34-54 (FGSL…FLAM), 78-99 (WLIR…YLHI), 114-134 (WNIG…GYVL), and 179-199 (FFAF…IHLL). 2 residues coordinate heme b: histidine 84 and histidine 98. Residues histidine 183 and histidine 197 each coordinate heme b. Histidine 202 lines the a ubiquinone pocket. The next 4 helical transmembrane spans lie at 227–247 (YKDL…ALFM), 289–309 (LGGV…PLLH), 321–341 (LTQI…WIGG), and 348–368 (FITV…IIMP).

Belongs to the cytochrome b family. As to quaternary structure, the cytochrome bc1 complex contains 3 respiratory subunits (MT-CYB, CYC1 and UQCRFS1), 2 core proteins (UQCRC1 and UQCRC2) and probably 6 low-molecular weight proteins. Heme b is required as a cofactor.

The protein localises to the mitochondrion inner membrane. In terms of biological role, component of the ubiquinol-cytochrome c reductase complex (complex III or cytochrome b-c1 complex) that is part of the mitochondrial respiratory chain. The b-c1 complex mediates electron transfer from ubiquinol to cytochrome c. Contributes to the generation of a proton gradient across the mitochondrial membrane that is then used for ATP synthesis. The protein is Cytochrome b (mt-cyb) of Sphyrna lewini (Scalloped hammerhead shark).